The primary structure comprises 1454 residues: ABC transporter G family member 39 (1454 aa).

Residues 175–448 (LGFFHLLPSK…FEYFGFQCPE (274 aa)) form the ABC transporter 1 domain. 208 to 215 (GPPSSGKT) contributes to the ATP binding site. The ABC transmembrane type-2 1 domain occupies 526–739 (ELFKACFDRE…GQTAIVMNEF (214 aa)). Transmembrane regions (helical) follow at residues 544 to 564 (FVYV…MTVY), 584 to 604 (MFFS…FTVM), 623 to 643 (FALP…GIWI), 663 to 683 (LLAY…LGAI), 689 to 709 (ISNS…GFII), 716 to 736 (PWMT…AIVM), and 775 to 795 (FWIC…FYIL). Over residues 812 to 824 (EEGKDKQKGENRG) the composition is skewed to basic and acidic residues. The interval 812 to 838 (EEGKDKQKGENRGTEGSVVELNSSSNK) is disordered. The ABC transporter 2 domain occupies 853–1106 (LAFNNVNYYV…LVEYFEAVEG (254 aa)). 898 to 905 (GVSGAGKT) is a binding site for ATP. Residues 1178-1392 (TQTKACFWKQ…TLYGLITSQV (215 aa)) enclose the ABC transmembrane type-2 2 domain. Transmembrane regions (helical) follow at residues 1199 to 1219 (AIRF…FWQI), 1231 to 1251 (NFFG…AATV), 1285 to 1303 (IMYN…YSMI), 1312 to 1332 (FLWF…YGMM), 1342 to 1362 (IAGI…GFLI), 1367 to 1387 (IPIW…LYGL), and 1423 to 1443 (FLPV…FVFA).

The protein belongs to the ABC transporter superfamily. ABCG family. PDR (TC 3.A.1.205) subfamily.

The protein resides in the membrane. Its function is as follows. May be a general defense protein. The protein is ABC transporter G family member 39 (ABCG39) of Arabidopsis thaliana (Mouse-ear cress).